A 2475-amino-acid chain; its full sequence is Gellan lyase (2475 aa).

The signal sequence occupies residues 1–35; sequence MRFSWKKLVSAALVMALLVGIVYPAASGRGAVASA. The Fibronectin type-III domain maps to 623-708; that stretch reads APANVQVAIS…QPATATSPGE (86 aa). A NodB homology domain is found at 1295–1518; the sequence is GAFSLTIDDN…RDQIWVGRYG (224 aa). Residues 2111–2223 enclose the Cohesin domain; sequence QPGQQLELTV…VSTAVSLSDF (113 aa).

Post-translationally, subject to proteolytic processing after secretion. Cleavage occurs between Gly-1205 and Leu-1206. This gives rise to a N-terminal gellan lyase of 130 kDa being the mature form of the gellan lyase. The function of C-terminal gellan lyase is not known.

The protein localises to the secreted. It carries out the reaction Eliminative cleavage of beta-D-glucopyranosyl-(1-&gt;4)-beta-D-glucopyranosyluronate bonds of gellan backbone releasing tetrasaccharides containing a 4-deoxy-4,5-unsaturated D-glucopyranosyluronic acid at the non-reducing end. The tetrasaccharide produced from deacetylated gellan is beta-D-4-deoxy-Delta(4)-GlcAp-(1-&gt;4)-beta-D-Glcp-(1-&gt;4)-alpha-L-Rhap-(1-&gt;3)-beta-D-Glcp.. In terms of biological role, cleaves the glycosidic bonds of gellan backbone and releases tetrasaccharide units of glucuronyl-glucosyl-rhamnosyl-glucose with unsaturated glucuronic acid at the non-reducing terminal. The enzyme is highly specific to the heteropolysaccharide gellan, especially deacetylated gellan. The protein is Gellan lyase of Bacillus sp.